The sequence spans 156 residues: ATP synthase subunit b (156 aa).

Residues 11-31 (AIAFILFVAFCMKYVWPPLMA) form a helical membrane-spanning segment.

Belongs to the ATPase B chain family. As to quaternary structure, F-type ATPases have 2 components, F(1) - the catalytic core - and F(0) - the membrane proton channel. F(1) has five subunits: alpha(3), beta(3), gamma(1), delta(1), epsilon(1). F(0) has three main subunits: a(1), b(2) and c(10-14). The alpha and beta chains form an alternating ring which encloses part of the gamma chain. F(1) is attached to F(0) by a central stalk formed by the gamma and epsilon chains, while a peripheral stalk is formed by the delta and b chains.

Its subcellular location is the cell inner membrane. Its function is as follows. F(1)F(0) ATP synthase produces ATP from ADP in the presence of a proton or sodium gradient. F-type ATPases consist of two structural domains, F(1) containing the extramembraneous catalytic core and F(0) containing the membrane proton channel, linked together by a central stalk and a peripheral stalk. During catalysis, ATP synthesis in the catalytic domain of F(1) is coupled via a rotary mechanism of the central stalk subunits to proton translocation. In terms of biological role, component of the F(0) channel, it forms part of the peripheral stalk, linking F(1) to F(0). The chain is ATP synthase subunit b from Erwinia tasmaniensis (strain DSM 17950 / CFBP 7177 / CIP 109463 / NCPPB 4357 / Et1/99).